Consider the following 22-residue polypeptide: GLWETIKNFGKTFTLNILDYTK.

In terms of tissue distribution, expressed by the skin glands.

The protein resides in the secreted. Its function is as follows. Has antibacterial activity. In Rana latastei (Italian agile frog), this protein is Brevinin-2LTa.